The chain runs to 671 residues: MPLIHRKKPTEKPSTPPSEEVVHDEDSQKKPHESSKSHHKKSNGGGKWSCIDSCCWFIGCVCVTWWFLLFLYNAMPASFPQYVTERITGPLPDPPGVKLKKEGLKAKHPVVFIPGIVTGGLELWEGKQCADGLFRKRLWGGTFGEVYKRPLCWVEHMSLDNETGLDPAGIRVRAVSGLVAADYFAPGYFVWAVLIANLAHIGYEEKNMYMAAYDWRLSFQNTEVRDQTLSRMKSNIELMVSTNGGKKAVIVPHSMGVLYFLHFMKWVEAPAPLGGGGGPDWCAKYIKAVMNIGGPFLGVPKAVAGLFSAEAKDVAVARAIAPGFLDTDIFRLQTLQHVMRMTRTWDSTMSMLPKGGDTIWGGLDWSPEKGHTCCGKKQKNNETCGEAGENGVSKKSPVNYGRMISFGKEVAEAAPSEINNIDFRGAVKGQSIPNHTCRDVWTEYHDMGIAGIKAIAEYKVYTAGEAIDLLHYVAPKMMARGAAHFSYGIADDLDDTKYQDPKYWSNPLETKLPNAPEMEIYSLYGVGIPTERAYVYKLNQSPDSCIPFQIFTSAHEEDEDSCLKAGVYNVDGDETVPVLSAGYMCAKAWRGKTRFNPSGIKTYIREYNHSPPANLLEGRGTQSGAHVDIMGNFALIEDIMRVAAGGNGSDIGHDQVHSGIFEWSERIDLKL.

Residues 1–46 (MPLIHRKKPTEKPSTPPSEEVVHDEDSQKKPHESSKSHHKKSNGGG) form a disordered region. Topologically, residues 1 to 54 (MPLIHRKKPTEKPSTPPSEEVVHDEDSQKKPHESSKSHHKKSNGGGKWSCIDSC) are cytoplasmic. Residues 20–36 (EVVHDEDSQKKPHESSK) are compositionally biased toward basic and acidic residues. A helical transmembrane segment spans residues 55-75 (CWFIGCVCVTWWFLLFLYNAM). Residues 76 to 671 (PASFPQYVTE…EWSERIDLKL (596 aa)) are Lumenal-facing. Residue Asn161 is glycosylated (N-linked (GlcNAc...) asparagine). Catalysis depends on Ser254, which acts as the Acyl-ester intermediate. N-linked (GlcNAc...) asparagine glycosylation is found at Asn381 and Asn434. Residues Asp573 and His626 each act as charge relay system in the active site. Asn647 carries N-linked (GlcNAc...) asparagine glycosylation.

This sequence belongs to the AB hydrolase superfamily. Lipase family. As to expression, ubiquitous. Highest expression in young developing seeds.

The protein localises to the membrane. It catalyses the reaction a glycerophospholipid + a 1,2-diacyl-sn-glycerol = a monoacylglycerophospholipid + a triacyl-sn-glycerol. It functions in the pathway glycerolipid metabolism; triacylglycerol biosynthesis. Triacylglycerol formation by an acyl-CoA independent pathway. The enzyme preferentially transfers acyl groups from the sn-2 position of a phospholipid to diacylglycerol, thus forming an sn-1-lysophospholipid. Involved in epoxy and hydroxy fatty acid accumulation in seeds. Has complementary functions with DAG1 that are essential for triacylglycerol synthesis and normal development of both seeds and pollen. The sequence is that of Phospholipid:diacylglycerol acyltransferase 1 (PDAT1) from Arabidopsis thaliana (Mouse-ear cress).